We begin with the raw amino-acid sequence, 557 residues long: Urocanate hydratase (557 aa).

Residues 53–54 (GG), Gln131, 177–179 (GMG), Glu197, Arg202, 243–244 (NA), 264–268 (QTSAH), 274–275 (YL), and Tyr323 contribute to the NAD(+) site. Cys411 is an active-site residue. Positions 445–464 (LDSGSVSSPNRETESMRDGS) are disordered. Residues 455 to 464 (RETESMRDGS) are compositionally biased toward basic and acidic residues. Gly493 provides a ligand contact to NAD(+).

It belongs to the urocanase family. NAD(+) serves as cofactor.

Its subcellular location is the cytoplasm. It catalyses the reaction 4-imidazolone-5-propanoate = trans-urocanate + H2O. Its pathway is amino-acid degradation; L-histidine degradation into L-glutamate; N-formimidoyl-L-glutamate from L-histidine: step 2/3. Its function is as follows. Catalyzes the conversion of urocanate to 4-imidazolone-5-propionate. The protein is Urocanate hydratase of Pseudomonas putida (strain W619).